Here is a 999-residue protein sequence, read N- to C-terminus: Receptor-like protein kinase 5 (999 aa).

An N-terminal signal peptide occupies residues 1 to 14 (MLYCLILLLCLSST). Over 15–621 (YLPSLSLNQD…LCRKITRSKN (607 aa)) the chain is Extracellular. 5 LRR repeats span residues 90–112 (SLHSLSLYNNSINGSLSADDFDT), 115–137 (NLISLDLSENLLVGSIPKSLPFN), 140–161 (NLKFLEISGNNLSDTIPSSFGE), 164–186 (KLESLNLAGNFLSGTIPASLGNV), and 188–208 (TLKELKLAYNLFSPSQIPSQL). 2 N-linked (GlcNAc...) asparagine glycosylation sites follow: N98 and N102. Residues N150 and N185 are each glycosylated (N-linked (GlcNAc...) asparagine). An N-linked (GlcNAc...) asparagine glycan is attached at N210. LRR repeat units lie at residues 213–236 (ELQVLWLAGCNLVGPIPPSLSRLT) and 237–259 (SLVNLDLTFNQLTGSIPSWITQL). N269 and N282 each carry an N-linked (GlcNAc...) asparagine glycan. LRR repeat units follow at residues 285–307 (TLKRFDASMNKLTGKIPDNLNLL), 308–330 (NLESLNLFENMLEGPLPESITRS), 332–353 (TLSELKLFNNRLTGVLPSQLGA), 356–378 (PLQYVDLSYNRFSGEIPANVCGE), 380–402 (KLEYLILIDNSFSGEISNNLGKC), 404–427 (SLTRVRLSNNKLSGQIPHGFWGLP), 428–450 (RLSLLELSDNSFTGSIPKTIIGA), 452–474 (NLSNLRISKNRFSGSIPNEIGSL), 500–523 (QLSRLDLSKNQLSGEIPRELRGWK), 524–546 (NLNELNLANNHLSGEIPKEVGIL), 548–569 (VLNYLDLSSNQFSGEIPLELQN), and 571–593 (KLNVLNLSYNHLSGKIPPLYANK). Residue N452 is glycosylated (N-linked (GlcNAc...) asparagine). A glycan (N-linked (GlcNAc...) asparagine) is linked at N576. A helical transmembrane segment spans residues 622–641 (IGYVWILLTIFLLAGLVFVV). The Cytoplasmic segment spans residues 642-999 (GIVMFIAKCR…PYYTEDLNSV (358 aa)). Residues 683–968 (LDEKNVIGFG…KVVIMLQEVS (286 aa)) form the Protein kinase domain. ATP is bound by residues 689–697 (IGFGSSGKV) and K711. Y766 and Y806 each carry phosphotyrosine. Residue D819 is the Proton acceptor of the active site. S856 carries the phosphoserine modification. 2 positions are modified to phosphotyrosine: Y864 and Y871. T872 carries the post-translational modification Phosphothreonine. The interval 972 to 999 (PCSSPNTSKRSKTGGKLSPYYTEDLNSV) is disordered.

Belongs to the protein kinase superfamily. Ser/Thr protein kinase family. In terms of assembly, interacts with CST. Binds to IDA. Mg(2+) is required as a cofactor. Requires Mn(2+) as cofactor. Post-translationally, autophosphorylated on Ser, Thr and Tyr residues. As to expression, expressed in roots and rosettes. Expressed at the base of petioles and pedicels, and in the abscission zones of the floral organs.

The protein resides in the cell membrane. It catalyses the reaction L-seryl-[protein] + ATP = O-phospho-L-seryl-[protein] + ADP + H(+). The enzyme catalyses L-threonyl-[protein] + ATP = O-phospho-L-threonyl-[protein] + ADP + H(+). The catalysed reaction is L-tyrosyl-[protein] + ATP = O-phospho-L-tyrosyl-[protein] + ADP + H(+). In terms of biological role, receptor with a dual specificity kinase activity acting on both serine/threonine- and tyrosine-containing substrates that controls floral organ abscission. May interact with the 'INFLORESCENCE DEFICIENT IN ABSCISSION' (IDA) ligands family. This chain is Receptor-like protein kinase 5 (RLK5), found in Arabidopsis thaliana (Mouse-ear cress).